The chain runs to 529 residues: Probable threonine/serine exporter (529 aa).

Transmembrane regions (helical) follow at residues 88–108, 168–188, 212–232, 234–254, 265–285, 312–332, 344–364, 365–385, 389–409, and 428–448; these read ITVT…PVTI, FALG…LAAV, VFGA…AGQD, TALV…VGSM, ALAR…GILI, MPLP…CLTI, AGLS…AGFG, RVVA…LISI, APAL…LAVF, and LLEA…GEFL. A disordered region spans residues 482-501; sequence QPAKSQQPTGTGGQRWRSVA.

It belongs to the ThrE exporter (TC 2.A.79) family.

It is found in the cell membrane. It catalyses the reaction L-threonine(in) + H(+)(out) = L-threonine(out) + H(+)(in). Catalyzes the export of L-threonine and L-serine from the cell to the extracellular environment. Export is dependent on the proton motive force. Required for in vitro growth and survival of bacteria inside macrophages. Increased expression is associated with low-level amikacin (AMK) resistance. The protein is Probable threonine/serine exporter of Mycobacterium tuberculosis (strain ATCC 25618 / H37Rv).